The following is a 308-amino-acid chain: Uridine diphosphate glucose pyrophosphatase NUDT22 (308 aa).

Substrate is bound by residues F56, Y86, R138, A143, D150, H155, and E157. The Nudix hydrolase domain occupies A117–H284. The short motif at G174–L195 is the Nudix box element. Mg(2+) is bound by residues E188 and E192. Position 273 (S273) interacts with substrate.

It belongs to the Nudix hydrolase family. Mg(2+) serves as cofactor.

It carries out the reaction UDP-sugar + H2O = UMP + alpha-D-aldose 1-phosphate.. Functionally, hydrolyzes UDP-glucose to glucose 1-phosphate and UMP and UDP-galactose to galactose 1-phosphate and UMP. Preferred substrate is UDP-glucose. The polypeptide is Uridine diphosphate glucose pyrophosphatase NUDT22 (Nudt22) (Mus musculus (Mouse)).